A 127-amino-acid chain; its full sequence is Large ribosomal subunit protein bL17 (127 aa).

Belongs to the bacterial ribosomal protein bL17 family. Part of the 50S ribosomal subunit. Contacts protein L32.

This Aeromonas hydrophila subsp. hydrophila (strain ATCC 7966 / DSM 30187 / BCRC 13018 / CCUG 14551 / JCM 1027 / KCTC 2358 / NCIMB 9240 / NCTC 8049) protein is Large ribosomal subunit protein bL17.